Reading from the N-terminus, the 222-residue chain is Ribosomal RNA small subunit methyltransferase G (222 aa).

S-adenosyl-L-methionine-binding positions include glycine 73, leucine 78, 124 to 125 (AE), and arginine 137.

Belongs to the methyltransferase superfamily. RNA methyltransferase RsmG family.

Its subcellular location is the cytoplasm. Specifically methylates the N7 position of guanine in position 518 of 16S rRNA. In Acidothermus cellulolyticus (strain ATCC 43068 / DSM 8971 / 11B), this protein is Ribosomal RNA small subunit methyltransferase G.